The following is a 100-amino-acid chain: Urease subunit gamma (100 aa).

The protein belongs to the urease gamma subunit family. In terms of assembly, heterotrimer of UreA (gamma), UreB (beta) and UreC (alpha) subunits. Three heterotrimers associate to form the active enzyme.

It localises to the cytoplasm. The catalysed reaction is urea + 2 H2O + H(+) = hydrogencarbonate + 2 NH4(+). The protein operates within nitrogen metabolism; urea degradation; CO(2) and NH(3) from urea (urease route): step 1/1. The polypeptide is Urease subunit gamma (Bordetella pertussis (strain Tohama I / ATCC BAA-589 / NCTC 13251)).